The following is a 916-amino-acid chain: MAASVQPRQFGHLEPGSAPVRGAASSNGAKAYPPANGIPRRADSPVRGCGFPPLVSPPPRKPPSDGSDDEEEEQEDWRELYGSHLQLEVEPPVRDARDEGTADAWIERNPSLIRLTGKHPLNCEPPLARLMHHGFITPAALHYVRNHGAVPRGDWSTWTVDVTGLVKRPMRLTMDELVNGFPAVEIPVTLVCAGNRRKEQNMVQQTVGFNWGAAGVSTSVWRGARLRDVLRRCGIMPSKGGALNVCFEGAEDLPGGGGSKYGTSITRQWALDPSRDIMLAYMQNGEPLLPDHGFPVRAIIPGCIGGRMVKWVKRIIVTTAESDNYYHYKDNRVLPSHVDAELANADAWWYKPEYIINELNVNSVITTPGHDEILPINGITTQRGYTMKGYAYSGGGKRITRVEVTLDGGETWLVCVLDLPEKPTKYGKHWCWCFWSVEVEVLDLLGAKEIAVRAWDQSHNTQPEKLIWNLMGMMNNCWFKVKVNVCRPHKGEIGLVFEHPTQPGNQTGGWMARQKHLETAEAAAPGLKRSTSTPFMNTTDGKQFTMSEVRKHSSQDSAWIVVHGHVYDCTAFLKDHPGGADSILINAGTDCTEEFDAIHSDKAKALLDTYRIGELITTGAGYSSDNSVHGASNLSQLAPIREAIKAPAPVALSSPRDKVPCQLVDKKELSRDVRLFRFALPSSDQVLGLPVGKHIFVCASIEGKLCMRAYTPTSMVDEVGHFDLLIKVYFKNEHPKFPDGGLMTQYLDSLPVGAYIDVKGPLGHVEYTGRGEFVINGKPRNARRLAMIAGGSGITPMYQVIQSVLRDQPEDTTEMHLVYANRTEDDILLRDELDRWAAEYPDRLKVWYVIDQVKRPEEGWKYGVGFVTEEVLREHVPEGGDDTLALACGPPPMIKFAVSPNLEKMKYDMANSFIVF.

The tract at residues 1–77 (MAASVQPRQF…DDEEEEQEDW (77 aa)) is disordered. The span at 66-76 (GSDDEEEEQED) shows a compositional bias: acidic residues. Cys192 contacts Mo-molybdopterin. In terms of domain architecture, Cytochrome b5 heme-binding spans 541 to 616 (GKQFTMSEVR…LDTYRIGELI (76 aa)). Residues His576 and His599 each coordinate heme. Residues 656 to 768 (RDKVPCQLVD…KGPLGHVEYT (113 aa)) form the FAD-binding FR-type domain. Residues 708-711 (RAYT), 725-729 (LIKVY), Phe730, Phe737, 742-744 (LMT), Ser792, and Thr795 contribute to the FAD site.

This sequence belongs to the nitrate reductase family. As to quaternary structure, homodimer. The cofactor is FAD. It depends on heme as a cofactor. Mo-molybdopterin serves as cofactor.

It carries out the reaction nitrite + NAD(+) + H2O = nitrate + NADH + H(+). Its function is as follows. Nitrate reductase is a key enzyme involved in the first step of nitrate assimilation in plants, fungi and bacteria. In Oryza sativa subsp. japonica (Rice), this protein is Nitrate reductase [NADH] 1 (NIA1).